The primary structure comprises 403 residues: MVLTARQRDELNQAIHQYLLISYQQSAQLFKTEAAVKDGQIEADLLEKKWNSIVRLSKRVITLEQQVEQLNEQLAQAQAGKIQFNKSDDEQRLTPIEKFKLEGHRAGVNCVAFHPQYQILGSASDDGSIKLWDYESGHFEKTLKGHTSNVNCLAFDPTGKYICSASSDLSIKIWELKNHTCVKTLIGHEHSVSTVQFSDHGDFILSASRDKNIKLWEVATGFCKKTFSEHQEWVRCAVFSNDEKQIASCSQDQMIYIWVIDSGQVLHQLSGHEHVVEQVKYIPEHGAKQILTQQQQQNIQTINLLVSVSRDKEIKIWNTILGTNLFTLSGHDNWVNGVSFHPDGVHMLSVSDDKTIRVWNLKEQKQKKKIENAHDKFILKCEINKFIFATCSVDQTIKLWLLS.

Positions 7–38 (QRDELNQAIHQYLLISYQQSAQLFKTEAAVKD) constitute a LisH domain. Residues 51–87 (NSIVRLSKRVITLEQQVEQLNEQLAQAQAGKIQFNKS) are a coiled coil. 7 WD repeats span residues 103–142 (GHRA…FEKT), 145–184 (GHTS…CVKT), 187–226 (GHEH…CKKT), 229–270 (EHQE…HQLS), 271–327 (GHEH…NLFT), 330–369 (GHDN…QKKK), and 373–403 (AHDK…WLLS).

Belongs to the WD repeat LIS1/nudF family.

Its subcellular location is the cytoplasm. It localises to the cytoskeleton. The protein resides in the microtubule organizing center. The protein localises to the centrosome. Positively regulates the activity of the minus-end directed microtubule motor protein dynein. May enhance dynein-mediated microtubule sliding by targeting dynein to the microtubule plus end. Required for several dynein- and microtubule-dependent processes. The chain is Lissencephaly-1 homolog 1 from Paramecium tetraurelia.